The primary structure comprises 1221 residues: Adhesion G-protein coupled receptor G6 (1221 aa).

An N-terminal signal peptide occupies residues 1–37 (MMFRSDRMWSCHWKWKPSPLLFLFALYIMCVPHSVWG). Residues 38 to 862 (CANCRVVLSN…ASQLDARNTK (825 aa)) lie on the Extracellular side of the membrane. The cysteines at positions 41 and 67 are disulfide-linked. The 109-residue stretch at 41-149 (CRVVLSNPSG…KGFNASYIRV (109 aa)) folds into the CUB domain. Residues E89 and D97 each contribute to the Ca(2+) site. Residues C94 and C111 are joined by a disulfide bond. N-linked (GlcNAc...) asparagine glycosylation occurs at N121. 3 residues coordinate Ca(2+): D134, S136, and I137. N-linked (GlcNAc...) asparagine glycosylation is found at N143, N206, N258, N314, N324, N353, N438, N445, N452, N485, N488, and N505. Positions 154-356 (RNQKVILPQT…ALKAESNLSC (203 aa)) constitute a Pentraxin (PTX) domain. Disulfide bonds link C186–C254 and C231–C277. The segment at 473–837 (EPRLVLWALL…SDASETVCLC (365 aa)) is mediates interaction with laminin-2. 2 cysteine pairs are disulfide-bonded: C525-C560 and C548-C580. N-linked (GlcNAc...) asparagine glycans are attached at residues N563, N593, N600, N605, N667, N673, N695, N704, N750, N776, N811, and N818. In terms of domain architecture, GAIN-B spans 670 to 853 (SHVNITTRNL…GVLMDLPRSA (184 aa)). 2 cysteine pairs are disulfide-bonded: C803-C835 and C822-C837. A GPS region spans residues 803–853 (CAFWDLNKNKSFGGWNTSGCVAHRDSDASETVCLCNHFTHFGVLMDLPRSA). A stachel region spans residues 842 to 850 (HFGVLMDLP). The helical transmembrane segment at 863 to 883 (VLTFISYIGCGISAIFSAATL) threads the bilayer. Over 884 to 903 (LTYVAFEKLRRDYPSKILMN) the chain is Cytoplasmic. The helical transmembrane segment at 904-924 (LSTALLFLNLLFLLDGWITSF) threads the bilayer. Topologically, residues 925–929 (NVDGL) are extracellular. A helical membrane pass occupies residues 930 to 950 (CIAVAVLLHFFLLATFTWMGL). At 951–970 (EAIHMYIALVKVFNTYIRRY) the chain is on the cytoplasmic side. Residues 971-991 (ILKFCIIGWGLPALVVSVVLA) traverse the membrane as a helical segment. Over 992-1024 (SRNNNEVYGKESYGKEKGDEFCWIQDPVIFYVT) the chain is Extracellular. The helical transmembrane segment at 1025 to 1045 (CAGYFGVMFFLNIAMFIVVMV) threads the bilayer. The Cytoplasmic segment spans residues 1046–1069 (QICGRNGKRSNRTLREEVLRNLRS). The chain crosses the membrane as a helical span at residues 1070-1090 (VVSLTFLLGMTWGFAFFAWGP). At 1091-1092 (LN) the chain is on the extracellular side. A helical membrane pass occupies residues 1093-1113 (IPFMYLFSIFNSLQGLFIFIF). A 17alpha-hydroxyprogesterone-binding site is contributed by N1103. At 1114–1221 (HCAMKENVQK…GQVLVKTGPC (108 aa)) the chain is on the cytoplasmic side. The interval 1156–1176 (NLGKSLSSSSIGSNSTYLTSK) is disordered. Phosphoserine occurs at positions 1165 and 1168.

It belongs to the G-protein coupled receptor 2 family. Adhesion G-protein coupled receptor (ADGR) subfamily. Heterodimer of 2 chains generated by proteolytic processing; the large extracellular N-terminal fragment and the membrane-bound C-terminal fragment predominantly remain associated and non-covalently linked. Interacts with Laminin-2; this interaction stabilizes the receptor in an inactive state. Laminin-2 polymerization could facilitate ADGRG6-NTF removal, thereby exposing the tethered agonist to drive myelination. Interacts with PRNP. Interacts with ITGB1. Interacts with LRP1. In terms of processing, proteolytically cleaved into 2 conserved sites: one in the GPS region of the GAIN-B domain (S1 site) and the other in the middle of the extracellular domain (S2 site). The proteolytic cleavage at S1 site generates an extracellular subunit and a seven-transmembrane subunit. Furin is involved in the cleavage of the S2 site generating a soluble fragment. Processing at the GPS region occurred independent of and probably prior to the cleavage at the S2 site. Proteolytic cleavage is required for activation of the receptor. Post-translationally, highly glycosylated. Expressed in placenta and to a lower extent in pancreas and liver. Detected in aortic endothelial cells but not in skin microvascular endothelial cells.

The protein localises to the cell membrane. Forms a heterodimer of 2 chains generated by proteolytic processing that remain associated through non-covalent interactions mediated by the GAIN-B domain. In the inactivated receptor, the Stachel sequence (also named stalk) is embedded in the GAIN-B domain, where it adopts a beta-strand conformation. On activation, the Stachel moves into the 7 transmembrane region and adopts a twisted hook-shaped configuration that forms contacts within the receptor, leading to coupling of a G-alpha protein, which activates signaling. The cleaved GAIN-B and N-terminal domains can then dissociate from the rest of the receptor. Adhesion G-protein coupled receptor (aGPCR) for steroid hormones, such as progesterone and 17alpha-hydroxyprogesterone (17OHP). Involved in many biological processes, such as myelination, sprouting angiogenesis, placenta, ear and cartilage development. Ligand binding causes a conformation change that triggers signaling via guanine nucleotide-binding proteins (G proteins) and modulates the activity of downstream effectors, such as adenylate cyclase. ADGRG6 is coupled to G(i) G alpha proteins and mediates inhibition of adenylate cyclase. Also able to couple to G(q) G proteins. Involved in myelination of the peripheral nervous system: required for differentiation of promyelinating Schwann cells and for normal myelination of axons. Also acts as a regulator of body length and bone mass. Acts as a regulator of blood-brain barrier formation in the central nervous system vie its association with LRP1 and ITGB1. The polypeptide is Adhesion G-protein coupled receptor G6 (Homo sapiens (Human)).